The sequence spans 43 residues: Protein PsbN (43 aa).

A helical membrane pass occupies residues Val7 to Phe27.

This sequence belongs to the PsbN family.

It is found in the plastid. Its subcellular location is the chloroplast thylakoid membrane. In terms of biological role, may play a role in photosystem I and II biogenesis. This chain is Protein PsbN, found in Zygnema circumcarinatum (Green alga).